The chain runs to 303 residues: Acetylglutamate kinase (303 aa).

Substrate contacts are provided by residues 69-70 (GG), Arg-91, and Asn-201.

Belongs to the acetylglutamate kinase family. ArgB subfamily.

Its subcellular location is the cytoplasm. It carries out the reaction N-acetyl-L-glutamate + ATP = N-acetyl-L-glutamyl 5-phosphate + ADP. Its pathway is amino-acid biosynthesis; L-arginine biosynthesis; N(2)-acetyl-L-ornithine from L-glutamate: step 2/4. Catalyzes the ATP-dependent phosphorylation of N-acetyl-L-glutamate. This chain is Acetylglutamate kinase, found in Novosphingobium aromaticivorans (strain ATCC 700278 / DSM 12444 / CCUG 56034 / CIP 105152 / NBRC 16084 / F199).